Reading from the N-terminus, the 134-residue chain is Ribosome-binding factor A (134 aa).

The protein belongs to the RbfA family. Monomer. Binds 30S ribosomal subunits, but not 50S ribosomal subunits or 70S ribosomes.

It localises to the cytoplasm. In terms of biological role, one of several proteins that assist in the late maturation steps of the functional core of the 30S ribosomal subunit. Associates with free 30S ribosomal subunits (but not with 30S subunits that are part of 70S ribosomes or polysomes). Required for efficient processing of 16S rRNA. May interact with the 5'-terminal helix region of 16S rRNA. This chain is Ribosome-binding factor A, found in Rhizobium johnstonii (strain DSM 114642 / LMG 32736 / 3841) (Rhizobium leguminosarum bv. viciae).